The following is a 416-amino-acid chain: Adenylosuccinate synthetase (416 aa).

Residues 13-19 and 41-43 contribute to the GTP site; these read GDEGKGK and GHT. Asp-14 serves as the catalytic Proton acceptor. Mg(2+) contacts are provided by Asp-14 and Gly-41. IMP contacts are provided by residues 14-17, 39-42, Thr-126, Arg-140, Gln-220, Thr-235, and Arg-299; these read DEGK and NAGH. Catalysis depends on His-42, which acts as the Proton donor. 295–301 serves as a coordination point for substrate; the sequence is VSTGRKR. GTP is bound by residues Arg-301, 327 to 329, and 405 to 407; these read KLD and STS.

It belongs to the adenylosuccinate synthetase family. In terms of assembly, homodimer. Mg(2+) is required as a cofactor.

The protein localises to the cytoplasm. It carries out the reaction IMP + L-aspartate + GTP = N(6)-(1,2-dicarboxyethyl)-AMP + GDP + phosphate + 2 H(+). It functions in the pathway purine metabolism; AMP biosynthesis via de novo pathway; AMP from IMP: step 1/2. In terms of biological role, plays an important role in the de novo pathway of purine nucleotide biosynthesis. Catalyzes the first committed step in the biosynthesis of AMP from IMP. This chain is Adenylosuccinate synthetase, found in Campylobacter jejuni subsp. jejuni serotype O:23/36 (strain 81-176).